The sequence spans 70 residues: DNA-binding transcriptional activator AlpA (70 aa).

The segment at residues 12 to 31 is a DNA-binding region (H-T-H motif); sequence LPAVIQKTGMARATIYDWLN.

In terms of biological role, positive regulator of the expression of the slpA gene. When overexpressed, leads to suppression of the capsule overproduction and UV sensitivity phenotypes of cells mutant for the Lon ATP-dependent protease. Part of the cryptic P4-like prophage CP4-57. Overexpression of AlpA leads to excision of the CP4-57 prophage by IntA. This inactivates ssrA (the gene upstream of the prophage) that encodes tmRNA which is required to rescue stalled ribosomes in a process known as trans-translation. This Escherichia coli (strain K12) protein is DNA-binding transcriptional activator AlpA.